Here is a 177-residue protein sequence, read N- to C-terminus: MTEQPTKPTGSRPPRQPRTGLTSTGARKAGSKSDRSRAREFALQALYQSLVGKNTVSDIDAFTRDLAGFSKADSLHFDTLLQGCTEQAAALDALLLPLLDRKFAEISPIEHSIMWIGAFELQHCLDVPWRVVLNECVELAKEFGGTDGHKYVNAVLNSLAPSLRAAEVNADRGKTRA.

Positions 1-36 are disordered; the sequence is MTEQPTKPTGSRPPRQPRTGLTSTGARKAGSKSDRS.

The protein belongs to the NusB family.

Its function is as follows. Involved in transcription antitermination. Required for transcription of ribosomal RNA (rRNA) genes. Binds specifically to the boxA antiterminator sequence of the ribosomal RNA (rrn) operons. This chain is Transcription antitermination protein NusB, found in Albidiferax ferrireducens (strain ATCC BAA-621 / DSM 15236 / T118) (Rhodoferax ferrireducens).